Consider the following 78-residue polypeptide: UPF0349 protein SSP1836 (78 aa).

Belongs to the UPF0349 family.

The chain is UPF0349 protein SSP1836 from Staphylococcus saprophyticus subsp. saprophyticus (strain ATCC 15305 / DSM 20229 / NCIMB 8711 / NCTC 7292 / S-41).